A 178-amino-acid chain; its full sequence is MQSADNLIWIDLEMTGLDVDSCKITEIAAIITDKDLNIIAEAEPIAIYQPDEVLANMNEWCIKTHTETGLTQRVKDSKISTEAAEQQILEFIRKFVPYQSSPLCGNSIWQDRRFLAKYMPNIDEYCHYRMLDVTTLKLLNQYWGDGKSFEKKNTHKALDDIRESIAELKFYRQKLLSI.

An Exonuclease domain is found at 7–168; it reads LIWIDLEMTG…DDIRESIAEL (162 aa). Tyrosine 128 is an active-site residue.

The protein belongs to the oligoribonuclease family.

It is found in the cytoplasm. 3'-to-5' exoribonuclease specific for small oligoribonucleotides. In Francisella tularensis subsp. tularensis (strain FSC 198), this protein is Oligoribonuclease.